The sequence spans 202 residues: ATP-dependent Clp protease proteolytic subunit (202 aa).

Residue Ser101 is the Nucleophile of the active site. The active site involves His126.

Belongs to the peptidase S14 family. As to quaternary structure, component of the chloroplastic Clp protease core complex.

It localises to the plastid. It is found in the chloroplast stroma. It carries out the reaction Hydrolysis of proteins to small peptides in the presence of ATP and magnesium. alpha-casein is the usual test substrate. In the absence of ATP, only oligopeptides shorter than five residues are hydrolyzed (such as succinyl-Leu-Tyr-|-NHMec, and Leu-Tyr-Leu-|-Tyr-Trp, in which cleavage of the -Tyr-|-Leu- and -Tyr-|-Trp bonds also occurs).. In terms of biological role, cleaves peptides in various proteins in a process that requires ATP hydrolysis. Has a chymotrypsin-like activity. Plays a major role in the degradation of misfolded proteins. The chain is ATP-dependent Clp protease proteolytic subunit from Nuphar advena (Common spatterdock).